The primary structure comprises 269 residues: Novel plant SNARE 13 (269 aa).

Residues 1–217 are Cytoplasmic-facing; sequence MASNLPMSPQ…IGRQVATDKC (217 aa). Residues 33–94 adopt a coiled-coil conformation; it reads DKIKDSTRQS…KQSMIKELNS (62 aa). The residue at position 74 (serine 74) is a Phosphoserine. In terms of domain architecture, t-SNARE coiled-coil homology spans 146-208; the sequence is MKRMDETDQA…KKASQLVKEI (63 aa). The helical; Anchor for type IV membrane protein transmembrane segment at 218-238 threads the bilayer; it reads IMGFLFLIVCGVVAIIIVKIV. Residues 239 to 269 lie on the Vesicular side of the membrane; sequence NPNNKDIRDIPGLAPPAQSRKLLYLRNQDYM.

It belongs to the novel plant SNARE family.

The protein localises to the membrane. Vesicle trafficking protein that functions in the secretory pathway. This chain is Novel plant SNARE 13 (NPSN13), found in Arabidopsis thaliana (Mouse-ear cress).